A 2813-amino-acid chain; its full sequence is A-kinase anchor protein 13 (2813 aa).

Disordered stretches follow at residues 304 to 400 (AQDP…QDSC) and 415 to 439 (LSSC…QESL). Residues 427-439 (TKSSGMPTDQESL) show a composition bias toward polar residues. The important for interaction with PRKAR2A stretch occupies residues 494–516 (WKNVLQGGESTKERFENSNIGTA). Disordered stretches follow at residues 539 to 585 (AASS…VDQN), 632 to 653 (HQNS…SPIC), and 690 to 726 (SEST…RDTQ). Over residues 561 to 577 (STEKTAETETSRSREES) the composition is skewed to basic and acidic residues. A compositionally biased stretch (polar residues) spans 690–702 (SESTTARQPSSQD). S790 is subject to Phosphoserine. Disordered stretches follow at residues 805–856 (VPSQ…AAEL) and 939–965 (ENAL…QFHE). The residue at position 815 (T815) is a Phosphothreonine. Over residues 835–844 (PDTRPLEDRA) the composition is skewed to basic and acidic residues. 2 stretches are compositionally biased toward polar residues: residues 847 to 856 (LSTSSTAAEL) and 939 to 948 (ENALSSGTLQ). Phosphothreonine is present on T953. Phosphoserine is present on S983. Disordered stretches follow at residues 1431–1455 (GVLK…DSII) and 1467–1542 (DITG…DSIT). Residues 1467–1478 (DITGSSSSTDDT) show a composition bias toward low complexity. Over residues 1488 to 1497 (GSDVSLSQIL) the composition is skewed to polar residues. A phosphoserine mark is found at S1489, S1507, S1540, S1565, and S1602. Residues 1525–1540 (SEPADPGDVEEEEMDS) show a composition bias toward acidic residues. The important for interaction with MAP2K3 stretch occupies residues 1585–1715 (RVLGDVVRRP…HSTFHNTSAN (131 aa)). Residues 1601 to 1638 (FSLEGLTGGAGVGNKPSSSLEVSSANAEELRHPFSGEE) form a disordered region. Polar residues predominate over residues 1615–1626 (KPSSSLEVSSAN). A compositionally biased stretch (basic and acidic residues) spans 1628–1638 (EELRHPFSGEE). Phosphoserine is present on residues S1642, S1645, and S1647. Position 1670 is an N6-methyllysine (K1670). The segment at 1755-1793 (KMSSSKKSKEKEKEKDKIKEKEKDSKDKEKDKKTVNGHT) is disordered. Positions 1758-1790 (SSKKSKEKEKEKDKIKEKEKDSKDKEKDKKTVN) form a coiled coil. The segment covering 1761-1788 (KSKEKEKEKDKIKEKEKDSKDKEKDKKT) has biased composition (basic and acidic residues). A Phorbol-ester/DAG-type zinc finger spans residues 1791 to 1838 (GHTFSSIPVVGPISCSQCMKPFTNKDAYTCANCSAFVHKGCRESLASC). Residues S1876, S1895, and S1929 each carry the phosphoserine modification. The interaction with ESR1 stretch occupies residues 1919–2813 (MSNTWKFLSH…VSAEGEEIFC (895 aa)). The residue at position 1930 (T1930) is a Phosphothreonine. Phosphoserine is present on residues S1932 and S1945. A DH domain is found at 1994-2191 (KRQEVIYELM…KDVIGAVDSK (198 aa)). The PH domain maps to 2231 to 2333 (KLVRDGSVFL…WIQIIQDTIN (103 aa)). Phosphoserine is present on residues S2345 and S2398. A coiled-coil region spans residues 2345–2381 (SENEEEKKMLDTRARELKEQLHQKDQKILLLLEEKEM). Residues 2466–2502 (ETFGGFDSHQMNASKGGEKEEGDDGQDLRRTESDSGL) are disordered. T2467 is modified (phosphothreonine). S2473 is subject to Phosphoserine. Residues 2491-2502 (QDLRRTESDSGL) are compositionally biased toward basic and acidic residues. S2563 and S2566 each carry phosphoserine. The stretch at 2568–2683 (LIEQEKQRSL…RLSQRQTERD (116 aa)) forms a coiled coil. Over residues 2665-2684 (QEQLRREAERLSQRQTERDL) the composition is skewed to basic and acidic residues. The disordered stretch occupies residues 2665–2813 (QEQLRREAER…VSAEGEEIFC (149 aa)). Residues S2703, S2709, and S2728 each carry the phosphoserine modification. Residues 2720–2735 (SLDSELSVSPKRNSIS) are compositionally biased toward polar residues. A compositionally biased stretch (low complexity) spans 2760–2771 (QSQAPASTSAST).

In terms of assembly, interacts with the cAMP-dependent protein kinase (PKA) holoenzyme and with the regulatory subunit PRKAR2A. Interacts with RHOA. Also interacts with RHOB and RHOC. Identified in a ternary complex with RHOA and PRKAR2A. Identified in a complex with NR3C1 and RHOA. Interacts with BRAF and KSR1. Identified in a complex with BRAF and KSR1. Component of a signaling complex containing at least AKAP13, PKN1, MAPK14, ZAK and MAP2K3. Within this complex, AKAP13 interacts directly with PKN1, which in turn recruits MAPK14, MAP2K3 and ZAK. Interacts (phosphorylated form) with YWHAB and YWHAZ. Interaction with YWHAB inhibits activation of RHOA, interferes with PKN1 binding and activation of MAP kinases. Interacts with GNA12. Interacts with IKBKB. Interacts with ESR1, THRA, PPARA and NME2. Interacts (via the C-terminal domain after the PH domain) with MEF2C and RXRB. Interacts (via the C-terminal domain after the PH domain) with PRKD1. As to expression, detected in mammary gland. Detected in heart (at protein level). Expressed as a 5.3 kb transcript in hematopoietic cells, skeletal muscle, lung, heart, estrogen-responsive reproductive tissues, including breast ductal epithelium. Also found in testis and breast cancer cell lines. Predominantly expressed as a 10 kb transcript in the heart and at lower levels in the lung, placenta, kidney, pancreas, skeletal muscle and liver. Transcripts of between 6-9 kb are also expressed in myeloid and lymphoid lineages, a variety of epithelial tissues, and in skeletal muscle.

It is found in the cytoplasm. The protein resides in the cytosol. Its subcellular location is the cell cortex. It localises to the nucleus. The protein localises to the membrane. In terms of biological role, scaffold protein that plays an important role in assembling signaling complexes downstream of several types of G protein-coupled receptors. Activates RHOA in response to signaling via G protein-coupled receptors via its function as Rho guanine nucleotide exchange factor. May also activate other Rho family members. Part of a kinase signaling complex that links ADRA1A and ADRA1B adrenergic receptor signaling to the activation of downstream p38 MAP kinases, such as MAPK11 and MAPK14. Part of a signaling complex that links ADRA1B signaling to the activation of RHOA and IKBKB/IKKB, leading to increased NF-kappa-B transcriptional activity. Part of a RHOA-dependent signaling cascade that mediates responses to lysophosphatidic acid (LPA), a signaling molecule that activates G-protein coupled receptors and potentiates transcriptional activation of the glucocorticoid receptor NR3C1. Part of a signaling cascade that stimulates MEF2C-dependent gene expression in response to lysophosphatidic acid (LPA). Part of a signaling pathway that activates MAPK11 and/or MAPK14 and leads to increased transcription activation of the estrogen receptors ESR1 and ESR2. Part of a signaling cascade that links cAMP and EGFR signaling to BRAF signaling and to PKA-mediated phosphorylation of KSR1, leading to the activation of downstream MAP kinases, such as MAPK1 or MAPK3. Functions as a scaffold protein that anchors cAMP-dependent protein kinase (PKA) and PRKD1. This promotes activation of PRKD1, leading to increased phosphorylation of HDAC5 and ultimately cardiomyocyte hypertrophy. Has no guanine nucleotide exchange activity on CDC42, Ras or Rac. Required for normal embryonic heart development, and in particular for normal sarcomere formation in the developing cardiomyocytes. Plays a role in cardiomyocyte growth and cardiac hypertrophy in response to activation of the beta-adrenergic receptor by phenylephrine or isoproterenol. Required for normal adaptive cardiac hypertrophy in response to pressure overload. Plays a role in osteogenesis. This is A-kinase anchor protein 13 (AKAP13) from Homo sapiens (Human).